Here is a 200-residue protein sequence, read N- to C-terminus: Diadenylate cyclase (200 aa).

The helical transmembrane segment at 5-25 threads the bilayer; the sequence is ILLFITLIFLLLLFVFLIAFA. The region spanning 28–185 is the DAC domain; that stretch reads NKRVRNYVVR…KGVIKTLSSN (158 aa).

This sequence belongs to the adenylate cyclase family. DacB/CdaS subfamily. In terms of assembly, probably oligomerizes.

It localises to the cell membrane. The catalysed reaction is 2 ATP = 3',3'-c-di-AMP + 2 diphosphate. Its function is as follows. Catalyzes the condensation of 2 ATP molecules into cyclic di-AMP (c-di-AMP), a second messenger used to regulate differing processes in different bacteria. The chain is Diadenylate cyclase from Mycoplasma genitalium (strain ATCC 33530 / DSM 19775 / NCTC 10195 / G37) (Mycoplasmoides genitalium).